We begin with the raw amino-acid sequence, 85 residues long: Toxin BmKa1 (85 aa).

The N-terminal stretch at 1-19 (MNYLVFFSLALLLMTGVGS) is a signal peptide. An LCN-type CS-alpha/beta domain is found at 21 to 83 (RDGYIADDKN…VPIRVPGKCN (63 aa)). 4 cysteine pairs are disulfide-bonded: Cys31–Cys82, Cys35–Cys55, Cys41–Cys65, and Cys45–Cys67.

This sequence belongs to the long (4 C-C) scorpion toxin superfamily. Sodium channel inhibitor family. Alpha subfamily. In terms of tissue distribution, expressed by the venom gland.

The protein resides in the secreted. Alpha toxins bind voltage-independently at site-3 of sodium channels (Nav) and inhibit the inactivation of the activated channels, thereby blocking neuronal transmission. In Olivierus martensii (Manchurian scorpion), this protein is Toxin BmKa1.